A 38-amino-acid chain; its full sequence is Potassium channel toxin alpha-KTx 3.2 (38 aa).

3 cysteine pairs are disulfide-bonded: Cys-8–Cys-28, Cys-14–Cys-33, and Cys-18–Cys-35.

This sequence belongs to the short scorpion toxin superfamily. Potassium channel inhibitor family. Alpha-KTx 03 subfamily. In terms of tissue distribution, expressed by the venom gland.

Its subcellular location is the secreted. Potent inhibitor of the Shaker potassium channels and its mammalian homologs (Kv1.1/KCNA1, Kv1.3/KCNA3, Kv1.6/KCNA6) (Ki&lt;1 nM for all channels). Also blocks Kv1.2/KCNA2 (IC(50)=26.8 nM). It also shows a weak interaction with nicotinic acetylcholine receptors (nAChR), suggesting it may weakly inhibit it. The sequence is that of Potassium channel toxin alpha-KTx 3.2 from Leiurus hebraeus (Hebrew deathstalker scorpion).